A 395-amino-acid chain; its full sequence is Tyrosine--tRNA ligase (395 aa).

The 'HIGH' region motif lies at 42-51 (PTAPDIHLGH). A 'KMSKS' region motif is present at residues 226–230 (KMSKS). K229 contacts ATP. The 61-residue stretch at 334 to 394 (IAISNLLKDA…GKRKFARITL (61 aa)) folds into the S4 RNA-binding domain.

Belongs to the class-I aminoacyl-tRNA synthetase family. TyrS type 2 subfamily. In terms of assembly, homodimer.

It localises to the cytoplasm. The enzyme catalyses tRNA(Tyr) + L-tyrosine + ATP = L-tyrosyl-tRNA(Tyr) + AMP + diphosphate + H(+). Functionally, catalyzes the attachment of tyrosine to tRNA(Tyr) in a two-step reaction: tyrosine is first activated by ATP to form Tyr-AMP and then transferred to the acceptor end of tRNA(Tyr). This Photobacterium profundum (strain SS9) protein is Tyrosine--tRNA ligase.